The sequence spans 807 residues: Probable dimethyl sulfoxide reductase chain YnfF (807 aa).

Positions 1–45 form a signal peptide, tat-type signal; the sequence is MKIHTTEALMKAEISRRSLMKTSALGSLALASSAFTLPFSQMVRA. One can recognise a 4Fe-4S Mo/W bis-MGD-type domain in the interval 52–113; that stretch reads EKAVWSSCTV…SIRRRMNHPD (62 aa). [4Fe-4S] cluster-binding residues include Cys59, Cys63, Cys67, and Cys99. Ser195 contacts Mo-bis(molybdopterin guanine dinucleotide).

It belongs to the prokaryotic molybdopterin-containing oxidoreductase family. As to quaternary structure, the complex consists of three subunits: YnfF, the reductase; YnfG, an electron transfer protein, and YnfH, a membrane anchor protein. The cofactor is [4Fe-4S] cluster. It depends on Mo-bis(molybdopterin guanine dinucleotide) as a cofactor. Post-translationally, exported by the Tat system. The position of the signal peptide cleavage has not been experimentally proven. Can also be exported by the Sec system.

The protein localises to the cell membrane. Functionally, terminal reductase during anaerobic growth on various sulfoxide and N-oxide compounds. The chain is Probable dimethyl sulfoxide reductase chain YnfF (ynfF) from Escherichia coli (strain K12).